The chain runs to 521 residues: MFS siderochrome iron transporter 1 (521 aa).

Residues 1-10 are compositionally biased toward polar residues; the sequence is MDKTASLTSQ. The disordered stretch occupies residues 1 to 29; that stretch reads MDKTASLTSQDAEKHDPDALRKERATDPP. Basic and acidic residues predominate over residues 11-29; sequence DAEKHDPDALRKERATDPP. 5 helical membrane passes run 62 to 82, 99 to 119, 126 to 146, 148 to 168, and 187 to 207; these read WGLF…PLMG, FLSL…AFGC, WSFN…GGTQ, FVAL…NMPV, and ILSI…WPLI. An N-linked (GlcNAc...) asparagine glycan is attached at asparagine 209. The next 6 membrane-spanning stretches (helical) occupy residues 229–249, 330–350, 379–399, 404–424, 431–451, and 466–486; these read YLLF…FFVF, LAWS…ASTL, VIIA…VEQP, KGTL…TTTA, LGWN…LYAI, and GLTA…ALYA. Residue asparagine 487 is glycosylated (N-linked (GlcNAc...) asparagine). A helical transmembrane segment spans residues 491–511; sequence AVPVYVSGALIIASGAMALLL.

This sequence belongs to the major facilitator superfamily.

It localises to the membrane. Functionally, major facilitator transporter probably involved in siderophore basidioferrin transmembrane transport. This is MFS siderochrome iron transporter 1 from Ceriporiopsis subvermispora (strain B) (White-rot fungus).